The sequence spans 183 residues: Protein Syd (183 aa).

The protein belongs to the Syd family.

Its subcellular location is the cell inner membrane. Interacts with the SecY protein in vivo. May bind preferentially to an uncomplexed state of SecY, thus functioning either as a chelating agent for excess SecY in the cell or as a regulatory factor that negatively controls the translocase function. The chain is Protein Syd from Yersinia enterocolitica serotype O:8 / biotype 1B (strain NCTC 13174 / 8081).